The sequence spans 324 residues: Ribosomal RNA small subunit methyltransferase H (324 aa).

Residues 40–42 (AGH), aspartate 60, leucine 94, aspartate 108, and histidine 115 contribute to the S-adenosyl-L-methionine site. Positions 301–324 (EEMKVNTRSRSAKLRVAERTGEDG) are disordered. The span at 315–324 (RVAERTGEDG) shows a compositional bias: basic and acidic residues.

Belongs to the methyltransferase superfamily. RsmH family.

Its subcellular location is the cytoplasm. It catalyses the reaction cytidine(1402) in 16S rRNA + S-adenosyl-L-methionine = N(4)-methylcytidine(1402) in 16S rRNA + S-adenosyl-L-homocysteine + H(+). In terms of biological role, specifically methylates the N4 position of cytidine in position 1402 (C1402) of 16S rRNA. The polypeptide is Ribosomal RNA small subunit methyltransferase H (Maridesulfovibrio salexigens (strain ATCC 14822 / DSM 2638 / NCIMB 8403 / VKM B-1763) (Desulfovibrio salexigens)).